A 220-amino-acid polypeptide reads, in one-letter code: Grancalcin (220 aa).

EF-hand domains lie at 51–86 (SPAD…SGIS), 92–127 (FSLE…LNAW), 122–157 (AALN…MGYR), and 158–193 (LSPQ…ALTD). 10 residues coordinate Ca(2+): aspartate 105, aspartate 107, threonine 109, lysine 111, glutamate 116, aspartate 135, aspartate 137, serine 139, threonine 141, and glutamate 146.

As to quaternary structure, homodimer. Interacts with SRI and LCP1.

The protein resides in the cytoplasm. It is found in the cytoplasmic granule membrane. Its function is as follows. Calcium-binding protein that may play a role in the adhesion of neutrophils to fibronectin. May play a role in the formation of focal adhesions. This Mus musculus (Mouse) protein is Grancalcin (Gca).